We begin with the raw amino-acid sequence, 530 residues long: Chaperone Ric-8A (530 aa).

Position 435 is a phosphoserine; by CK2 (S435). T440 is modified (phosphothreonine; by CK2). A Phosphothreonine modification is found at T442. Phosphoserine is present on residues S501, S522, S523, and S527.

It belongs to the synembryn family. As to quaternary structure, interacts with GDP-bound G alpha proteins GNAI1, GNAO1 and GNAQ, and with GNA13 with lower affinity. Does not interact with G-alpha proteins when they are in complex with subunits beta and gamma. Interacts (via C-terminus) with RGS14; the interaction stimulates the dissociation of the complex between RGS14 and the active GTP-bound form of GNAI1. Interacts with NCS1; interaction is favored in the absence of Ca(2+) and myristoylation of NCS1 is not required. Phosphorylated at Ser-435 and Thr-440 by CK2, stabilizing its interface with G alpha proteins.

It is found in the cytoplasm. It localises to the cell cortex. Functionally, chaperone that specifically binds and folds nascent G alpha proteins prior to G protein heterotrimer formation, promoting their stability and activity: folds GNAI1, GNAO1, GNA13 and GNAQ. Does not fold G(s) G-alpha proteins GNAS nor GNAL. Also acts as a guanine nucleotide exchange factor (GEF) for G alpha proteins by stimulating exchange of bound GDP for free GTP. Involved in regulation of microtubule pulling forces during mitotic movement of chromosomes by stimulating G(i)-alpha protein (GNAI1), possibly leading to release G(i)-alpha-GTP and NuMA proteins from the NuMA-GPSM2-G(i)-alpha-GDP complex. Also acts as an activator for G(q)-alpha (GNAQ) protein by enhancing the G(q)-coupled receptor-mediated ERK activation. The sequence is that of Chaperone Ric-8A from Rattus norvegicus (Rat).